Consider the following 139-residue polypeptide: Sec-independent protein translocase protein TatB (139 aa).

The chain crosses the membrane as a helical span at residues 1–21 (MFDMGFLELMLIGVVALLVLG). The segment covering 66–86 (QQRKLDAGLGKVRDEVERHGD) has biased composition (basic and acidic residues). The tract at residues 66–139 (QQRKLDAGLG…APSAKDSNAP (74 aa)) is disordered.

Belongs to the TatB family. The Tat system comprises two distinct complexes: a TatABC complex, containing multiple copies of TatA, TatB and TatC subunits, and a separate TatA complex, containing only TatA subunits. Substrates initially bind to the TatABC complex, which probably triggers association of the separate TatA complex to form the active translocon.

Its subcellular location is the cell inner membrane. Its function is as follows. Part of the twin-arginine translocation (Tat) system that transports large folded proteins containing a characteristic twin-arginine motif in their signal peptide across membranes. Together with TatC, TatB is part of a receptor directly interacting with Tat signal peptides. TatB may form an oligomeric binding site that transiently accommodates folded Tat precursor proteins before their translocation. The sequence is that of Sec-independent protein translocase protein TatB from Chromohalobacter salexigens (strain ATCC BAA-138 / DSM 3043 / CIP 106854 / NCIMB 13768 / 1H11).